The chain runs to 352 residues: Maleylacetate reductase (352 aa).

Belongs to the iron-containing alcohol dehydrogenase family.

It carries out the reaction 3-oxoadipate + NAD(+) = maleylacetate + NADH + H(+). The catalysed reaction is 3-oxoadipate + NADP(+) = maleylacetate + NADPH + H(+). It participates in aromatic compound metabolism; 3-chlorocatechol degradation. This is Maleylacetate reductase (tcbF) from Pseudomonas sp. (strain P51).